We begin with the raw amino-acid sequence, 417 residues long: WAT1-related protein At3g02690, chloroplastic (417 aa).

A chloroplast-targeting transit peptide spans 1-68 (MEWPWSAIAA…RRINGDSVVR (68 aa)). The disordered stretch occupies residues 67 to 92 (VRRSTTSNNSTEETESSSSSSSVDCV). A compositionally biased stretch (low complexity) spans 68–89 (RRSTTSNNSTEETESSSSSSSV). 10 helical membrane passes run 122–142 (FLEW…MVAM), 152–172 (FFVA…FAVY), 183–203 (AWFS…GFLA), 213–233 (LGSV…SFLF), 237–257 (IGIV…LLEV), 269–289 (LWGS…IGTV), 301–321 (IMAT…ISVI), 339–359 (VIAL…VYFY), 369–389 (LSSL…LYLN), and 392–412 (FSSL…LVNF). EamA domains follow at residues 133 to 255 (FFWG…LLLL) and 283 to 411 (SMAI…YLVN).

It belongs to the drug/metabolite transporter (DMT) superfamily. Plant drug/metabolite exporter (P-DME) (TC 2.A.7.4) family.

The protein resides in the plastid. The protein localises to the chloroplast membrane. This is WAT1-related protein At3g02690, chloroplastic from Arabidopsis thaliana (Mouse-ear cress).